We begin with the raw amino-acid sequence, 198 residues long: Probable GTP-binding protein EngB (198 aa).

The EngB-type G domain maps to 36–198; the sequence is SDPQFAFIGR…NLSKLQELLE (163 aa). GTP-binding positions include 44-51, 70-74, 88-91, 155-158, and 182-184; these read GRSNVGKS, GRTQL, DLPG, NKID, and ISA. Residues serine 51 and threonine 72 each contribute to the Mg(2+) site.

It belongs to the TRAFAC class TrmE-Era-EngA-EngB-Septin-like GTPase superfamily. EngB GTPase family. It depends on Mg(2+) as a cofactor.

Necessary for normal cell division and for the maintenance of normal septation. This Mesomycoplasma hyopneumoniae (strain J / ATCC 25934 / NCTC 10110) (Mycoplasma hyopneumoniae) protein is Probable GTP-binding protein EngB.